Reading from the N-terminus, the 689-residue chain is Glycine--tRNA ligase beta subunit (689 aa).

Belongs to the class-II aminoacyl-tRNA synthetase family. In terms of assembly, tetramer of two alpha and two beta subunits.

It localises to the cytoplasm. The enzyme catalyses tRNA(Gly) + glycine + ATP = glycyl-tRNA(Gly) + AMP + diphosphate. The polypeptide is Glycine--tRNA ligase beta subunit (Salmonella dublin (strain CT_02021853)).